The primary structure comprises 898 residues: Probable LRR receptor-like serine/threonine-protein kinase At4g20450 (898 aa).

The signal sequence occupies residues 1–24 (MEGIHKLIFLALIWIFLITNIVDA). Residues 25-535 (QDQQGFISLD…TGPGNNKKKL (511 aa)) lie on the Extracellular side of the membrane. N-linked (GlcNAc...) asparagine glycans are attached at residues Asn40, Asn52, Asn98, Asn247, Asn253, Asn420, Asn443, Asn465, Asn484, and Asn489. LRR repeat units lie at residues 455–477 (QLQK…LAKM), 479–501 (LLTF…LLNM), and 505–526 (GLIT…ESET). A helical transmembrane segment spans residues 536–556 (LVPILASAASVGIIIAVLLLV). Topologically, residues 557-898 (NILLLRKKKP…FGPEHIPDAR (342 aa)) are cytoplasmic. Thr582 carries the phosphothreonine modification. The Protein kinase domain occupies 591 to 864 (NNFERPLGEG…QVANELQECL (274 aa)). ATP-binding positions include 597 to 605 (LGEGGFGVV) and Lys619. A Phosphotyrosine modification is found at Tyr664. Residue Asp716 is the Proton acceptor of the active site. Ser750 bears the Phosphoserine mark. A Phosphothreonine modification is found at Thr751. Tyr764 bears the Phosphotyrosine mark. Residues 864 to 898 (LLTENSRKGGRHDVDSKSSLEQSTSFGPEHIPDAR) form a disordered region. Over residues 868 to 881 (NSRKGGRHDVDSKS) the composition is skewed to basic and acidic residues.

Belongs to the protein kinase superfamily. Ser/Thr protein kinase family.

It localises to the membrane. The enzyme catalyses L-seryl-[protein] + ATP = O-phospho-L-seryl-[protein] + ADP + H(+). It carries out the reaction L-threonyl-[protein] + ATP = O-phospho-L-threonyl-[protein] + ADP + H(+). The protein is Probable LRR receptor-like serine/threonine-protein kinase At4g20450 of Arabidopsis thaliana (Mouse-ear cress).